The chain runs to 676 residues: Transcription factor RLM1 (676 aa).

One can recognise an MADS-box domain in the interval R3–F57. A DNA-binding region (mef2-type) is located at residues S58–D87. The span at S103–S120 shows a compositional bias: polar residues. Residues S103–P156 form a disordered region. A Phosphoserine modification is found at S120. Positions E121–D134 are enriched in acidic residues. The residue at position 164 (S164) is a Phosphoserine. Basic and acidic residues predominate over residues D173–E183. Disordered regions lie at residues D173–L192, I202–L318, N330–S424, K472–L514, and M532–T631. Over residues I260 to T276 the composition is skewed to polar residues. Low complexity predominate over residues N284 to N295. Polar residues predominate over residues Y296 to V312. Composition is skewed to low complexity over residues S334–S359, S368–S381, and P399–N417. A phosphoserine mark is found at S374 and S377. Over residues K472–L506 the composition is skewed to polar residues. Residues P539 to N604 are compositionally biased toward low complexity. Polar residues predominate over residues G621–T631.

It belongs to the MEF2 family. In terms of assembly, can heterodimerize with SPM1. Interacts with KDX1 and SLT2. Post-translationally, phosphorylated by SLT2.

The protein resides in the nucleus. Functionally, may function as a transcription factor downstream of MPK1 that is subject to activation by the MPK1 mitogen-activated protein kinase pathway. Binds to the DNA sequence 5'-CTA[TA](4)TAG-3'. At least some RML1 target genes are involved in cell wall biosynthesis. The protein is Transcription factor RLM1 (RLM1) of Saccharomyces cerevisiae (strain ATCC 204508 / S288c) (Baker's yeast).